The sequence spans 375 residues: 1-deoxy-D-xylulose 5-phosphate reductoisomerase (375 aa).

Residues Thr-10, Gly-11, Ser-12, Val-13, Lys-37, and Asn-114 each coordinate NADPH. Lys-115 serves as a coordination point for 1-deoxy-D-xylulose 5-phosphate. Residue Glu-116 coordinates NADPH. Residue Asp-136 participates in Mn(2+) binding. Residues Ser-137, Glu-138, Ser-162, and His-185 each contribute to the 1-deoxy-D-xylulose 5-phosphate site. Mn(2+) is bound at residue Glu-138. Gly-191 contributes to the NADPH binding site. 4 residues coordinate 1-deoxy-D-xylulose 5-phosphate: Ser-198, Asn-203, Lys-204, and Glu-207. Glu-207 contributes to the Mn(2+) binding site.

The protein belongs to the DXR family. The cofactor is Mg(2+). Mn(2+) serves as cofactor.

The enzyme catalyses 2-C-methyl-D-erythritol 4-phosphate + NADP(+) = 1-deoxy-D-xylulose 5-phosphate + NADPH + H(+). The protein operates within isoprenoid biosynthesis; isopentenyl diphosphate biosynthesis via DXP pathway; isopentenyl diphosphate from 1-deoxy-D-xylulose 5-phosphate: step 1/6. Its function is as follows. Catalyzes the NADPH-dependent rearrangement and reduction of 1-deoxy-D-xylulose-5-phosphate (DXP) to 2-C-methyl-D-erythritol 4-phosphate (MEP). In Sulfurihydrogenibium sp. (strain YO3AOP1), this protein is 1-deoxy-D-xylulose 5-phosphate reductoisomerase.